Reading from the N-terminus, the 768-residue chain is uncharacterized protein (768 aa).

To E.coli YkiA.

This is an uncharacterized protein from Escherichia coli (strain K12).